A 452-amino-acid chain; its full sequence is Digeranylgeranylglycerophospholipid reductase (452 aa).

FAD contacts are provided by residues 15–16 (FA), 35–36 (DS), and 45–50 (KPCGDA). Residue H55 participates in a 2,3-bis-O-phytanyl-sn-glycerol 1-phospholipid binding. Positions 122 and 288 each coordinate FAD. Residue H297 coordinates a 2,3-bis-O-phytanyl-sn-glycerol 1-phospholipid. 300 to 301 (GK) lines the FAD pocket. C310 and C335 are disulfide-bonded. Y340 lines the a 2,3-bis-O-phytanyl-sn-glycerol 1-phospholipid pocket.

It belongs to the geranylgeranyl reductase family. In terms of assembly, monomer. It depends on FAD as a cofactor.

It catalyses the reaction a 2,3-bis-O-phytanyl-sn-glycerol 1-phospholipid + 8 A = a 2,3-bis-O-(geranylgeranyl)-sn-glycerol 1-phospholipid + 8 AH2. The enzyme catalyses 2,3-bis-O-(phytanyl)-sn-glycerol 1-phosphate + 8 A = 2,3-bis-O-(geranylgeranyl)-sn-glycerol 1-phosphate + 8 AH2. The catalysed reaction is sn-3-O-phytanylglycerol 1-phosphate + 4 A = sn-3-O-(geranylgeranyl)glycerol 1-phosphate + 4 AH2. It carries out the reaction phytyl diphosphate + 3 A = (2E,6E,10E)-geranylgeranyl diphosphate + 3 AH2. The protein operates within membrane lipid metabolism; glycerophospholipid metabolism. In terms of biological role, is involved in the reduction of 2,3-digeranylgeranylglycerophospholipids (unsaturated archaeols) into 2,3-diphytanylglycerophospholipids (saturated archaeols) in the biosynthesis of archaeal membrane lipids. Catalyzes the formation of archaetidic acid (2,3-di-O-phytanyl-sn-glyceryl phosphate) from 2,3-di-O-geranylgeranylglyceryl phosphate (DGGGP) via the hydrogenation of each double bond of the isoprenoid chains. Is not active with NADPH or NADH as an electron donor; the physiological reducing agent is unknown. Is also active on the more upstream precursors of membrane lipid biosynthesis, catalyzing the complete reduction of 3-O-geranylgeranylglyceryl phosphate (GGGP) to 3-O-phytanylglyceryl phosphate, and the partial reduction of geranylgeranyl diphosphate (GGPP) to phytyl diphosphate, thus reducing three of four GGPP double bonds and preserving the allylic double bond (at position 2). This reaction product is a reactive prenyl donor, which can be used as a substrate by archaeal prenyltransferases such as GGGP synthases. The polypeptide is Digeranylgeranylglycerophospholipid reductase (Sulfolobus acidocaldarius (strain ATCC 33909 / DSM 639 / JCM 8929 / NBRC 15157 / NCIMB 11770)).